A 62-amino-acid chain; its full sequence is Photosystem II reaction center protein Z (62 aa).

Transmembrane regions (helical) follow at residues 8–28 and 41–61; these read TLFALILFSFVLVVGVPVVFA and LSGLGLWILLVFVVGILNSFV.

The protein belongs to the PsbZ family. In terms of assembly, PSII is composed of 1 copy each of membrane proteins PsbA, PsbB, PsbC, PsbD, PsbE, PsbF, PsbH, PsbI, PsbJ, PsbK, PsbL, PsbM, PsbT, PsbY, PsbZ, Psb30/Ycf12, at least 3 peripheral proteins of the oxygen-evolving complex and a large number of cofactors. It forms dimeric complexes.

It is found in the plastid. It localises to the chloroplast thylakoid membrane. In terms of biological role, may control the interaction of photosystem II (PSII) cores with the light-harvesting antenna, regulates electron flow through the 2 photosystem reaction centers. PSII is a light-driven water plastoquinone oxidoreductase, using light energy to abstract electrons from H(2)O, generating a proton gradient subsequently used for ATP formation. The sequence is that of Photosystem II reaction center protein Z from Stigeoclonium helveticum (Green alga).